We begin with the raw amino-acid sequence, 679 residues long: Enzymatic polyprotein (679 aa).

The protease stretch occupies residues 40-130; it reads LHCFVDTGAS…LYEPFIQFTD (91 aa). The active site involves D45. The 181-residue stretch at 272–452 folds into the Reverse transcriptase domain; it reads LKVIKPSKSP…KKINFLGLEI (181 aa).

The protein belongs to the caulimoviridae enzymatic polyprotein family.

It carries out the reaction DNA(n) + a 2'-deoxyribonucleoside 5'-triphosphate = DNA(n+1) + diphosphate. Its function is as follows. Encodes for at least two polypeptides: protease (PR) and reverse transcriptase (RT). The protease processes the polyprotein in cis. Reverse transcriptase is multifunctional enzyme that converts the viral RNA genome into dsDNA in viral cytoplasmic capsids. This enzyme displays a DNA polymerase activity that can copy either DNA or RNA templates, and a ribonuclease H (RNase H) activity that cleaves the RNA strand of RNA-DNA heteroduplexes in a partially processive 3'- to 5'-endonucleasic mode. Neo-synthesized pregenomic RNA (pgRNA) are encapsidated, and reverse-transcribed inside the nucleocapsid. Partial (+)DNA is synthesized from the (-)DNA template and generates the relaxed circular DNA (RC-DNA) genome. After budding and infection, the RC-DNA migrates in the nucleus, and is converted into a plasmid-like covalently closed circular DNA (cccDNA). The sequence is that of Enzymatic polyprotein from Arabidopsis thaliana (Mouse-ear cress).